We begin with the raw amino-acid sequence, 363 residues long: DNA replication and repair protein RecF (363 aa).

Residue Gly33 to Thr40 participates in ATP binding.

This sequence belongs to the RecF family.

The protein resides in the cytoplasm. Its function is as follows. The RecF protein is involved in DNA metabolism; it is required for DNA replication and normal SOS inducibility. RecF binds preferentially to single-stranded, linear DNA. It also seems to bind ATP. This Tropheryma whipplei (strain TW08/27) (Whipple's bacillus) protein is DNA replication and repair protein RecF.